A 298-amino-acid chain; its full sequence is MGLAGGARVVLFVVAAAAAAALTAAADQIFTSSGAPFGRNSREPRYHVEFHPVDAPFNPENGQESVPMTSHVGKHYTCFLPVEETKTMKSIIPQNATNVIIESERRVKPKDPDELLEILKDQCFYRHEGWWSYEFCYYGKIRQVHVEGEKVIQEYVLGEYDADATDAYYENQTSDSADEDDNLIDTSKRYHVHLYTNGTVCDLTDMPRETEVRFVCSEPTVVISSIKEISSCKYVLTVQSPMLCKNPLFQQEKRTLSIHCNELLAEAEATVDDDSLPKEAQIIIPDPDGLHNYAAYAT.

The signal sequence occupies residues 1 to 25 (MGLAGGARVVLFVVAAAAAAALTAA). Residue Asn-95 is glycosylated (N-linked (GlcNAc...) asparagine). The region spanning 121–246 (DQCFYRHEGW…TVQSPMLCKN (126 aa)) is the MRH domain. The cysteines at positions 123 and 136 are disulfide-linked. A mannooligosaccharide derivative is bound by residues Trp-130, Trp-131, and Gln-143. N-linked (GlcNAc...) asparagine glycans are attached at residues Asn-171 and Asn-197. Disulfide bonds link Cys-201–Cys-232 and Cys-216–Cys-244. A mannooligosaccharide derivative-binding residues include Asp-202, Arg-208, Glu-228, and Tyr-234.

It belongs to the OS-9 family. Interacts with HRD3.

The protein resides in the endoplasmic reticulum. Lectin which functions in endoplasmic reticulum (ER) quality control and ER-associated degradation (ERAD). May bind terminally misfolded non-glycosylated proteins as well as improperly folded glycoproteins, retain them in the ER, and possibly transfer them to the ubiquitination machinery and promote their degradation. This chain is Protein OS-9 homolog, found in Oryza sativa subsp. japonica (Rice).